Here is a 397-residue protein sequence, read N- to C-terminus: Heterogeneous nuclear ribonucleoprotein K homolog (397 aa).

Residues M1–F41 form a disordered region. The span at K16 to T30 shows a compositional bias: basic and acidic residues. KH domains are found at residues K49–V111 and P124–V189. The interval G220–G279 is disordered. The segment covering G224–R241 has biased composition (low complexity). The region spanning V316–L379 is the KH 3 domain.

In terms of assembly, interacts with alg-1; the interaction is direct and may be strengthened through RNA-protein association. Expressed in gut, muscle, neuronal and hypodermal tissues. Highly expressed in the germline and oocytes.

The protein resides in the nucleus. It is found in the cytoplasm. In terms of biological role, RNA-binding protein which functions together with alg-1, a component of the miRNA loading complex, to modulate the processing and activity of specific miRNAs such as miR-58 and let-7 to regulate gene expression at the post-transcriptional level during embryonic, hypodermal and neuronal development. Promotes the lsy-6-mediated repression of cog-1 in uterine cells. In embryos, may play a role in the DNA damage response. This chain is Heterogeneous nuclear ribonucleoprotein K homolog, found in Caenorhabditis elegans.